A 344-amino-acid chain; its full sequence is Phenylalanine--tRNA ligase alpha subunit (344 aa).

E256 serves as a coordination point for Mg(2+).

Belongs to the class-II aminoacyl-tRNA synthetase family. Phe-tRNA synthetase alpha subunit type 1 subfamily. In terms of assembly, tetramer of two alpha and two beta subunits. Requires Mg(2+) as cofactor.

It is found in the cytoplasm. It catalyses the reaction tRNA(Phe) + L-phenylalanine + ATP = L-phenylalanyl-tRNA(Phe) + AMP + diphosphate + H(+). This Onion yellows phytoplasma (strain OY-M) protein is Phenylalanine--tRNA ligase alpha subunit.